The following is a 189-amino-acid chain: dCTP deaminase (189 aa).

Residues 112–117 (KSTYAR), 136–138 (TLE), Gln-157, Tyr-171, and Gln-181 each bind dCTP. Glu-138 (proton donor/acceptor) is an active-site residue.

It belongs to the dCTP deaminase family. In terms of assembly, homotrimer.

It catalyses the reaction dCTP + H2O + H(+) = dUTP + NH4(+). Its pathway is pyrimidine metabolism; dUMP biosynthesis; dUMP from dCTP (dUTP route): step 1/2. Catalyzes the deamination of dCTP to dUTP. This Teredinibacter turnerae (strain ATCC 39867 / T7901) protein is dCTP deaminase.